The following is a 473-amino-acid chain: MKTLYSLRRFYPVETLFNGTLALAGRDQETTGFAWWAGNARLINLSGKLLGAHVAHAGLIVFWAGAMNLFEVAHFVPEKPMYEQGLILLPHLATLGWGVGPGGEVIDTFPYFVSGVLHLISSAVLGFGGIYHALLGPETLEESFPFFGYVWKDRNKMTTILGIHLILLGIGAFLLVFKALYFGGVYDTWAPGGGDVRKITNLTLSPSVIFGYLLKSPFGGEGWIVSVDDLEDIIGGHVWLGSICILGGIWHILTKPFAWARRALVWSGEAYLSYSLGALAVFGFIACCFVWFNNTAYPSEFYGPTGPEASQAQAFTFLVRDQRLGANVGSAQGPTGLGKYLMRSPTGEVIFGGETMRFWDLRAPWLEPLRGPNGLDLSRLKKDIQPWQERRSAEYMTHAPLGSLNSVGGVATEINAVNYVSPRSWLATSHFVLGFFLFVGHLWHAGRARAAAAGFEKGIDRDFEPVLSMTPLN.

A propeptide spanning residues 1–14 (MKTLYSLRRFYPVE) is cleaved from the precursor. An N-acetylthreonine modification is found at Thr15. Thr15 carries the phosphothreonine modification. 5 helical membrane-spanning segments follow: residues 69-93 (LFEVAHFVPEKPMYEQGLILLPHLA), 134-155 (LLGPETLEESFPFFGYVWKDRN), 178-200 (KALYFGGVYDTWAPGGGDVRKIT), 255-275 (KPFAWARRALVWSGEAYLSYS), and 291-312 (WFNNTAYPSEFYGPTGPEASQA). Glu367 is a binding site for [CaMn4O5] cluster. Residues 447-471 (RARAAAAGFEKGIDRDFEPVLSMTP) traverse the membrane as a helical segment.

It belongs to the PsbB/PsbC family. PsbC subfamily. As to quaternary structure, PSII is composed of 1 copy each of membrane proteins PsbA, PsbB, PsbC, PsbD, PsbE, PsbF, PsbH, PsbI, PsbJ, PsbK, PsbL, PsbM, PsbT, PsbX, PsbY, PsbZ, Psb30/Ycf12, at least 3 peripheral proteins of the oxygen-evolving complex and a large number of cofactors. It forms dimeric complexes. Requires Binds multiple chlorophylls and provides some of the ligands for the Ca-4Mn-5O cluster of the oxygen-evolving complex. It may also provide a ligand for a Cl- that is required for oxygen evolution. PSII binds additional chlorophylls, carotenoids and specific lipids. as cofactor.

Its subcellular location is the plastid. It is found in the chloroplast thylakoid membrane. Functionally, one of the components of the core complex of photosystem II (PSII). It binds chlorophyll and helps catalyze the primary light-induced photochemical processes of PSII. PSII is a light-driven water:plastoquinone oxidoreductase, using light energy to abstract electrons from H(2)O, generating O(2) and a proton gradient subsequently used for ATP formation. The chain is Photosystem II CP43 reaction center protein from Populus trichocarpa (Western balsam poplar).